The sequence spans 241 residues: Large ribosomal subunit protein uL3 (241 aa).

Disordered regions lie at residues 139–164 (VSHRSIGSTGGRQDPGKTFKNKKMPG) and 215–241 (DAPKPGKFRLANGGDEVAAPAAEQEGA). Residue glutamine 151 is modified to N5-methylglutamine.

The protein belongs to the universal ribosomal protein uL3 family. Part of the 50S ribosomal subunit. Forms a cluster with proteins L14 and L19. Post-translationally, methylated by PrmB.

Its function is as follows. One of the primary rRNA binding proteins, it binds directly near the 3'-end of the 23S rRNA, where it nucleates assembly of the 50S subunit. This Rhodopseudomonas palustris (strain BisB5) protein is Large ribosomal subunit protein uL3.